The sequence spans 386 residues: MCERAARLCRAGAHRLLREPPQQGRALGGLLRWVGARMGEPRESLAPAAPADPGPASPRGGTAVILDIFRRADKNDDGKLSLEEFQLFFADGVLNEKELEDLFHTIDSDNTNHVDTKELCDYFVDHMGDYEDVLASLETLNHSVLKAMGYTKKVYEGGSNVDQFVTRFLLKETANQIQSLLSSVESAVEAIEEQTSQLRQNHIKPSHSAAQTWCGSPTPASAPNHKLMAMEQGKTLPSATEDAKEEGLEAQISRLAELIGRLESKALWFDLQQRLSDEDGTNMHLQLVRQEMAVCPEQLSEFLDSLRQYLRGTTGVRNCFHITAVRLSDGFTFVIYEFWETEEAWKRHLQSPLCKAFRHVKVDTLSQPEALSRILVPAAWCTVGRD.

The residue at position 10 (R10) is an Omega-N-methylarginine. R42 is subject to Asymmetric dimethylarginine. 2 consecutive EF-hand domains span residues 60–95 (GGTAVILDIFRRADKNDDGKLSLEEFQLFFADGVLN) and 96–129 (EKELEDLFHTIDSDNTNHVDTKELCDYFVDHMGD). D73, N75, D77, K79, E84, D107, D109, T111, H113, and E118 together coordinate Ca(2+). Positions 170–201 (LKETANQIQSLLSSVESAVEAIEEQTSQLRQN) form a coiled coil. Residues 286–375 (QLVRQEMAVC…SQPEALSRIL (90 aa)) enclose the ABM domain.

In terms of assembly, interacts (calcium-dependent) with ADORA2A and GRM5. Expressed in brain. Expressed in the spinal dorsal horn with especially strong expression in lamina IIi; found in excitory synaptic boutons and in ependymal cells (at protein level).

The protein resides in the cytoplasm. Its subcellular location is the cell projection. The protein localises to the dendrite. It localises to the axon. It is found in the cell membrane. In terms of biological role, may act as a signaling scaffold protein that senses intracellular calcium. Can modulate ligand-induced internalization of ADORA2A and coupling efficiency of mGluR5/GRM5; for both receptors may regulate signaling activity such as promoting MAPK1/3 (ERK1/2) activation. In Homo sapiens (Human), this protein is N-terminal EF-hand calcium-binding protein 2 (NECAB2).